Here is a 425-residue protein sequence, read N- to C-terminus: Serine--tRNA ligase (425 aa).

232–234 (TSE) lines the L-serine pocket. ATP is bound by residues 263–265 (RRE) and valine 279. Glutamate 286 contributes to the L-serine binding site. 350–353 (EVVS) lines the ATP pocket. L-serine is bound at residue threonine 387.

Belongs to the class-II aminoacyl-tRNA synthetase family. Type-1 seryl-tRNA synthetase subfamily. In terms of assembly, homodimer. The tRNA molecule binds across the dimer.

It localises to the cytoplasm. It catalyses the reaction tRNA(Ser) + L-serine + ATP = L-seryl-tRNA(Ser) + AMP + diphosphate + H(+). It carries out the reaction tRNA(Sec) + L-serine + ATP = L-seryl-tRNA(Sec) + AMP + diphosphate + H(+). It functions in the pathway aminoacyl-tRNA biosynthesis; selenocysteinyl-tRNA(Sec) biosynthesis; L-seryl-tRNA(Sec) from L-serine and tRNA(Sec): step 1/1. Its function is as follows. Catalyzes the attachment of serine to tRNA(Ser). Is also able to aminoacylate tRNA(Sec) with serine, to form the misacylated tRNA L-seryl-tRNA(Sec), which will be further converted into selenocysteinyl-tRNA(Sec). The protein is Serine--tRNA ligase of Methanospirillum hungatei JF-1 (strain ATCC 27890 / DSM 864 / NBRC 100397 / JF-1).